The sequence spans 492 residues: Probable cytochrome P450 516B1 (492 aa).

The chain crosses the membrane as a helical span at residues 1 to 17 (MYLILSLIIFLAYVAFH). Cys438 is a heme binding site.

The protein belongs to the cytochrome P450 family. The cofactor is heme.

The protein localises to the membrane. This chain is Probable cytochrome P450 516B1 (cyp516B1), found in Dictyostelium discoideum (Social amoeba).